Here is a 447-residue protein sequence, read N- to C-terminus: Chromosomal replication initiator protein DnaA (447 aa).

The tract at residues 1 to 74 is domain I, interacts with DnaA modulators; it reads MPDVESFWHS…TGFKLTGAEV (74 aa). The interval 74-109 is domain II; that stretch reads VMPHFVVADEKDAALAQELEEPAEEEVVFSEQSKKA. Residues 110–326 form a domain III, AAA+ region region; that stretch reads MLNPKYTFDT…GALVRVQAFA (217 aa). ATP-binding residues include glycine 154, glycine 156, lysine 157, and threonine 158. The segment at 327-447 is domain IV, binds dsDNA; it reads TINGEDITTS…VSEIKNLLNS (121 aa).

Belongs to the DnaA family. In terms of assembly, oligomerizes as a right-handed, spiral filament on DNA at oriC.

The protein resides in the cytoplasm. Its function is as follows. Plays an essential role in the initiation and regulation of chromosomal replication. ATP-DnaA binds to the origin of replication (oriC) to initiate formation of the DNA replication initiation complex once per cell cycle. Binds the DnaA box (a 9 base pair repeat at the origin) and separates the double-stranded (ds)DNA. Forms a right-handed helical filament on oriC DNA; dsDNA binds to the exterior of the filament while single-stranded (ss)DNA is stabiized in the filament's interior. The ATP-DnaA-oriC complex binds and stabilizes one strand of the AT-rich DNA unwinding element (DUE), permitting loading of DNA polymerase. After initiation quickly degrades to an ADP-DnaA complex that is not apt for DNA replication. Binds acidic phospholipids. Strand separation requires the DnaA boxes and adjacent DnaA-trio motifs as well as ATP. This is Chromosomal replication initiator protein DnaA from Enterococcus faecalis (strain ATCC 700802 / V583).